The sequence spans 638 residues: MTHPPKTPLLDQVTYPADLRKLEDRDLPQLAREVRDEMIDAVSRTGGHLGAGLGVVELTIAIHSVFDTPNDRLIFDVGHQCYPHKILTGRRDRIRTLRQENGLSGFTRRAESEYDPFGAAHSSTSISAGLGMAIAADLEKTDRRVIAVIGDGAMSAGMAYEALNNAGALDARLIVILNDNDMSIAPPTGAMSAYLARLASGRTYMGFRDFGKKLTAYLGKNIDRAITRAVEHARGYVTGGTMFEEMGFYHIGPIDGHSFDHLLPVLRNVRDNARGPVLIHVVTQKGKGYPPAEAAADKYHGVNKFDVITGAQARVKPNAPSYTSVFAEALVQEAALDDKIVGITAAMPNGTGLDKLAEAFPSRCFDVGIAEQHAVTFAAGLAAEGYKPFAALYSTFLQRAYDQVVHDVAIQGLPVRFPIDRAGFVGADGPTHAGSFDTAFLATLPGFVVMAAADEAELKHMVRTAAAYDAGPISFRYPRGEGVGVDMPARGEILQIGKGRIVKEGTKVALLSFGTRLADCLLASEDLEAAGLSTTVADARFAKPLDHELLRQLARHHEMLITVEEGSVGGFGSQVMQYLSSEGLLDNGLKIRSLVMPDIWMEQAKPEAMNAHAGLDRAGIVSTVFRALRRGVAVGVAG.

Thiamine diphosphate is bound by residues His-79 and 120–122; that span reads AHS. Residue Asp-151 coordinates Mg(2+). Residues 152–153, Asn-180, Tyr-289, and Glu-371 contribute to the thiamine diphosphate site; that span reads GA. Residue Asn-180 coordinates Mg(2+).

The protein belongs to the transketolase family. DXPS subfamily. In terms of assembly, homodimer. Mg(2+) serves as cofactor. Thiamine diphosphate is required as a cofactor.

The catalysed reaction is D-glyceraldehyde 3-phosphate + pyruvate + H(+) = 1-deoxy-D-xylulose 5-phosphate + CO2. The protein operates within metabolic intermediate biosynthesis; 1-deoxy-D-xylulose 5-phosphate biosynthesis; 1-deoxy-D-xylulose 5-phosphate from D-glyceraldehyde 3-phosphate and pyruvate: step 1/1. In terms of biological role, catalyzes the acyloin condensation reaction between C atoms 2 and 3 of pyruvate and glyceraldehyde 3-phosphate to yield 1-deoxy-D-xylulose-5-phosphate (DXP). In Rhizobium etli (strain ATCC 51251 / DSM 11541 / JCM 21823 / NBRC 15573 / CFN 42), this protein is 1-deoxy-D-xylulose-5-phosphate synthase.